A 523-amino-acid chain; its full sequence is ATP synthase subunit alpha (523 aa).

173-180 contributes to the ATP binding site; the sequence is GDRQTGKT.

This sequence belongs to the ATPase alpha/beta chains family. As to quaternary structure, F-type ATPases have 2 components, CF(1) - the catalytic core - and CF(0) - the membrane proton channel. CF(1) has five subunits: alpha(3), beta(3), gamma(1), delta(1), epsilon(1). CF(0) has three main subunits: a(1), b(2) and c(9-12). The alpha and beta chains form an alternating ring which encloses part of the gamma chain. CF(1) is attached to CF(0) by a central stalk formed by the gamma and epsilon chains, while a peripheral stalk is formed by the delta and b chains.

The protein localises to the cell membrane. The catalysed reaction is ATP + H2O + 4 H(+)(in) = ADP + phosphate + 5 H(+)(out). Functionally, produces ATP from ADP in the presence of a proton gradient across the membrane. The alpha chain is a regulatory subunit. This chain is ATP synthase subunit alpha, found in Streptomyces griseus subsp. griseus (strain JCM 4626 / CBS 651.72 / NBRC 13350 / KCC S-0626 / ISP 5235).